Reading from the N-terminus, the 527-residue chain is MGFQVWQKGLCVLCFSLIFICGVIGEETTIVKIEENPVAQTDENYVCATLDLWPPTKCNYGNCPWGKSSFLNLDLNNNIIRNAVKEFAPLKLRFGGTLQDRLVYQTSRDEPCDSTFYNNTNLILDFSHACLSLDRWDEINQFILETGSEAVFGLNALRGKTVEIKGIIKDGQYLGETTTAVGEWDYSNSKFLIEYSLKKGYKHIRGWTLGNELGGHTLFIGVSPEDYANDAKKLHELVKEIYQDQGTMPLIIAPGAIFDLEWYTEFIDRTPELHVATHHMYNLGSGGDDALKDVLLTASFFDEATKSMYEGLQKIVNRPGTKAVAWIGEAGGAFNSGQDGISNTFINGFWYLNMLGYSALLDTKTFCRQTLTGGNYGLLQTGTYIPNPDYYSALLWHRLMGSKVLKTEIVGTKNVYIYAHCAKKSNGITMLVLNHDGESSVKISLDPSKYGSKREEYHLTPVNNNLQSRLVKLNGELLHLDPSGVIPALNPVEKDNSKQLEVAPYSFMFVHLPGPTMFSACEKPAGK.

A signal peptide spans 1-25 (MGFQVWQKGLCVLCFSLIFICGVIG). The active-site Proton donor is the Glu-212. Glu-329 functions as the Nucleophile in the catalytic mechanism.

This sequence belongs to the glycosyl hydrolase 79 family. As to quaternary structure, homotetramer.

It carries out the reaction baicalin + H2O = baicalein + D-glucuronate + H(+). Its function is as follows. Beta-glucuronidase involved in the initiation of H(2)O(2) metabolism via the production of baicalein. Unable to use glycyrrhizin, gypsogenin-3-O-D-glucuronide, luteolin-7-O-D-glucoside and apigenin-7-O-D-glucoside as substrates. The polypeptide is Baicalin-beta-D-glucuronidase (SGUS) (Scutellaria baicalensis (Baical skullcap)).